A 402-amino-acid polypeptide reads, in one-letter code: MTYQQPDAKGFYGKFGGQFVPETLMTAVIELDKAYREAKEDSSFQAELDDLLKNYVGRETPLYHAKRLTDHIGGAQIYLKREDLNHTGAHKINNALGQVLLAKRMGKKKIIAETGAGQHGVATATAAALFDMDCTIYMGEEDVKRQALNVFRMELLGAKVFSVTDGSRVLKDAVNAALRAWVAGIDDTHYIMGSALGPAPFPEIVRDFQSVIGREVKRQYAEISGGKLPDAVMACIGGGSNAIGMFYPFVNDKSVAMYGAEASGLGLDTEKHAATFAKGRPGILHGALMDVLQDAHGQIMEAFSISAGLDYPGVGPEHCYFNEIGRATYDSITDEEALEGFKLLSRLEGIIPALESSHAIALAQKVAAKMSPDQSLIVCLSGRGDKDVMQVKERFEAEAEGK.

At Lys91 the chain carries N6-(pyridoxal phosphate)lysine.

The protein belongs to the TrpB family. Tetramer of two alpha and two beta chains. The cofactor is pyridoxal 5'-phosphate.

It catalyses the reaction (1S,2R)-1-C-(indol-3-yl)glycerol 3-phosphate + L-serine = D-glyceraldehyde 3-phosphate + L-tryptophan + H2O. It participates in amino-acid biosynthesis; L-tryptophan biosynthesis; L-tryptophan from chorismate: step 5/5. Its function is as follows. The beta subunit is responsible for the synthesis of L-tryptophan from indole and L-serine. This Streptococcus thermophilus (strain ATCC BAA-491 / LMD-9) protein is Tryptophan synthase beta chain.